The following is a 235-amino-acid chain: Ion-translocating oxidoreductase complex subunit E (235 aa).

5 helical membrane passes run 63 to 83 (LGLG…ISLF), 93 to 113 (IPIY…LMNA), 117 to 137 (TLYQ…IIIG), 152 to 172 (IWDG…LGAL), and 206 to 226 (SFLL…LLAI).

Belongs to the NqrDE/RnfAE family. In terms of assembly, the complex is composed of six subunits: RnfA, RnfB, RnfC, RnfD, RnfE and RnfG.

It is found in the cell inner membrane. Part of a membrane-bound complex that couples electron transfer with translocation of ions across the membrane. The protein is Ion-translocating oxidoreductase complex subunit E of Haemophilus influenzae (strain ATCC 51907 / DSM 11121 / KW20 / Rd).